Reading from the N-terminus, the 127-residue chain is Major sperm protein 63 (127 aa).

Ala2 is modified (N-acetylalanine). The MSP domain maps to 9–126 (DIQTQPGTKI…RRKNLPIEYN (118 aa)).

In terms of tissue distribution, sperm.

It is found in the cell projection. The protein localises to the pseudopodium. Its subcellular location is the cytoplasm. It localises to the cytoskeleton. Its function is as follows. Central component in molecular interactions underlying sperm crawling. Forms an extensive filament system that extends from sperm villipoda, along the leading edge of the pseudopod. The sequence is that of Major sperm protein 63 (msp-63) from Caenorhabditis elegans.